A 172-amino-acid chain; its full sequence is Large ribosomal subunit protein uL10 (172 aa).

It belongs to the universal ribosomal protein uL10 family. Part of the ribosomal stalk of the 50S ribosomal subunit. The N-terminus interacts with L11 and the large rRNA to form the base of the stalk. The C-terminus forms an elongated spine to which L12 dimers bind in a sequential fashion forming a multimeric L10(L12)X complex.

In terms of biological role, forms part of the ribosomal stalk, playing a central role in the interaction of the ribosome with GTP-bound translation factors. The polypeptide is Large ribosomal subunit protein uL10 (Chlorobium luteolum (strain DSM 273 / BCRC 81028 / 2530) (Pelodictyon luteolum)).